A 428-amino-acid polypeptide reads, in one-letter code: Serine--tRNA ligase (428 aa).

An L-serine-binding site is contributed by 237-239; that stretch reads TAE. 268–270 contacts ATP; that stretch reads RSE. Glutamate 291 serves as a coordination point for L-serine. 355 to 358 is a binding site for ATP; sequence EISS. Serine 390 is a binding site for L-serine.

The protein belongs to the class-II aminoacyl-tRNA synthetase family. Type-1 seryl-tRNA synthetase subfamily. Homodimer. The tRNA molecule binds across the dimer.

It localises to the cytoplasm. It carries out the reaction tRNA(Ser) + L-serine + ATP = L-seryl-tRNA(Ser) + AMP + diphosphate + H(+). It catalyses the reaction tRNA(Sec) + L-serine + ATP = L-seryl-tRNA(Sec) + AMP + diphosphate + H(+). It functions in the pathway aminoacyl-tRNA biosynthesis; selenocysteinyl-tRNA(Sec) biosynthesis; L-seryl-tRNA(Sec) from L-serine and tRNA(Sec): step 1/1. Its function is as follows. Catalyzes the attachment of serine to tRNA(Ser). Is also able to aminoacylate tRNA(Sec) with serine, to form the misacylated tRNA L-seryl-tRNA(Sec), which will be further converted into selenocysteinyl-tRNA(Sec). The polypeptide is Serine--tRNA ligase (Hydrogenovibrio crunogenus (strain DSM 25203 / XCL-2) (Thiomicrospira crunogena)).